The primary structure comprises 124 residues: Small ribosomal subunit protein uS12 (124 aa).

A disordered region spans residues 1 to 24; the sequence is MPTISQLVRKGRAKITKKSKSAAL. Positions 9–20 are enriched in basic residues; it reads RKGRAKITKKSK. Asp-89 bears the 3-methylthioaspartic acid mark. The segment at 105–124 is disordered; it reads AGVEGRTQRRSKYGAKRPKK. Basic residues predominate over residues 112-124; that stretch reads QRRSKYGAKRPKK.

This sequence belongs to the universal ribosomal protein uS12 family. As to quaternary structure, part of the 30S ribosomal subunit. Contacts proteins S8 and S17. May interact with IF1 in the 30S initiation complex.

Functionally, with S4 and S5 plays an important role in translational accuracy. Interacts with and stabilizes bases of the 16S rRNA that are involved in tRNA selection in the A site and with the mRNA backbone. Located at the interface of the 30S and 50S subunits, it traverses the body of the 30S subunit contacting proteins on the other side and probably holding the rRNA structure together. The combined cluster of proteins S8, S12 and S17 appears to hold together the shoulder and platform of the 30S subunit. This chain is Small ribosomal subunit protein uS12, found in Christiangramia forsetii (strain DSM 17595 / CGMCC 1.15422 / KT0803) (Gramella forsetii).